The sequence spans 254 residues: DNA repair protein RecO (254 aa).

This sequence belongs to the RecO family.

Functionally, involved in DNA repair and RecF pathway recombination. This Gluconacetobacter diazotrophicus (strain ATCC 49037 / DSM 5601 / CCUG 37298 / CIP 103539 / LMG 7603 / PAl5) protein is DNA repair protein RecO.